The chain runs to 147 residues: Large ribosomal subunit protein uL15 (147 aa).

A disordered region spans residues 1 to 58; it reads MKLHELKPAQGSTKAPKRLGRGIGSGTGKTSGKGHKGQKARAGGGVRPGFEGGQQPLA. Gly residues-rich tracts occupy residues 21–31 and 42–52; these read RGIGSGTGKTS and AGGGVRPGFEG.

Belongs to the universal ribosomal protein uL15 family. As to quaternary structure, part of the 50S ribosomal subunit.

In terms of biological role, binds to the 23S rRNA. This is Large ribosomal subunit protein uL15 from Desulfitobacterium hafniense (strain Y51).